The sequence spans 465 residues: Ribulose bisphosphate carboxylase large chain (465 aa).

Lys-4 carries the post-translational modification N6,N6,N6-trimethyllysine. Substrate contacts are provided by Asn-113 and Thr-163. Catalysis depends on Lys-165, which acts as the Proton acceptor. Lys-167 serves as a coordination point for substrate. Mg(2+)-binding residues include Lys-191, Asp-193, and Glu-194. An N6-carboxylysine modification is found at Lys-191. The active-site Proton acceptor is His-284. 3 residues coordinate substrate: Arg-285, His-317, and Ser-369.

It belongs to the RuBisCO large chain family. Type I subfamily. Heterohexadecamer of 8 large chains and 8 small chains; disulfide-linked. The disulfide link is formed within the large subunit homodimers. Mg(2+) is required as a cofactor. In terms of processing, the disulfide bond which can form in the large chain dimeric partners within the hexadecamer appears to be associated with oxidative stress and protein turnover.

It is found in the plastid. Its subcellular location is the chloroplast. The catalysed reaction is 2 (2R)-3-phosphoglycerate + 2 H(+) = D-ribulose 1,5-bisphosphate + CO2 + H2O. It catalyses the reaction D-ribulose 1,5-bisphosphate + O2 = 2-phosphoglycolate + (2R)-3-phosphoglycerate + 2 H(+). Its function is as follows. RuBisCO catalyzes two reactions: the carboxylation of D-ribulose 1,5-bisphosphate, the primary event in carbon dioxide fixation, as well as the oxidative fragmentation of the pentose substrate in the photorespiration process. Both reactions occur simultaneously and in competition at the same active site. The sequence is that of Ribulose bisphosphate carboxylase large chain from Ilex crenata (Japanese holly).